Here is a 1197-residue protein sequence, read N- to C-terminus: DNA-directed RNA polymerase subunit beta (1197 aa).

The span at Gln581–Val597 shows a compositional bias: polar residues. Disordered stretches follow at residues Gln581–Asp603 and Glu1172–Val1197.

Belongs to the RNA polymerase beta chain family. In terms of assembly, the RNAP catalytic core consists of 2 alpha, 1 beta, 1 beta' and 1 omega subunit. When a sigma factor is associated with the core the holoenzyme is formed, which can initiate transcription.

It carries out the reaction RNA(n) + a ribonucleoside 5'-triphosphate = RNA(n+1) + diphosphate. In terms of biological role, DNA-dependent RNA polymerase catalyzes the transcription of DNA into RNA using the four ribonucleoside triphosphates as substrates. This Oenococcus oeni (strain ATCC BAA-331 / PSU-1) protein is DNA-directed RNA polymerase subunit beta.